Here is a 334-residue protein sequence, read N- to C-terminus: Tryptophan--tRNA ligase (334 aa).

ATP-binding positions include 11–13 (QPS) and 19–20 (GN). Positions 12–20 (PSGELTIGN) match the 'HIGH' region motif. L-tryptophan is bound at residue aspartate 135. Residues 147–149 (GED), valine 186, and 195–199 (KMSKS) contribute to the ATP site. A 'KMSKS' region motif is present at residues 195-199 (KMSKS).

This sequence belongs to the class-I aminoacyl-tRNA synthetase family. As to quaternary structure, homodimer.

The protein localises to the cytoplasm. The catalysed reaction is tRNA(Trp) + L-tryptophan + ATP = L-tryptophyl-tRNA(Trp) + AMP + diphosphate + H(+). Functionally, catalyzes the attachment of tryptophan to tRNA(Trp). The polypeptide is Tryptophan--tRNA ligase (Shigella flexneri).